Here is a 545-residue protein sequence, read N- to C-terminus: MNIQTENTKTVGADFDAVVIGAGFGGLYAVHKLRNEQGLNVRGYDSASDVGGTWWWNRYPGALSDTESYVYRYSFDKELLRKGRWKTRYLTQPEILEYMNEVADHLDLRRSYKFDTKVDGAHYNEKTGLWNVITDSGETVTAKYLVTGLGLLSATNVPKFKGIDDFKGRILHTGAWPEGVDLSNKRVGIIGTGSTGVQVITATAPIAKHLTVFQRSAQYVVPIGNTPQDDATIAEQKANYDNIWNQVKNSVVAFGFEESAEPAETASPEERERVFEAAWQRGGGFYFMFGTFCDIATSQVANDAAADFIKGKIKQIVKDPKVAEKLTPKDLYAKRPLCGNNYYEVYNRDNVTLADVKADPIAEFTPNGIRLESGEEHELDIVIFATGFDAVDGNYVKMDLRGRGGVTMRDTWKEGPLGYLGMMEVDFPNFFMILGPNGPFTNLPPSIETQVEWIADTICAMEEEGVQSVEPTVEARDAWVGTCREIADMTLFPKAESWIFGANIPGKKNAVMFYMAGIGNYRNAISAVKEEGYTSLIRDRTAEKV.

Residues phenylalanine 24, aspartate 45, tryptophan 54, aspartate 65, tyrosine 71, and valine 118 each coordinate FAD.

It belongs to the FAD-binding monooxygenase family. It depends on FAD as a cofactor.

Catalyzes a Baeyer-Villiger oxidation reaction, i.e. the insertion of an oxygen atom into a carbon-carbon bond adjacent to a carbonyl, which converts ketones to esters or lactones using NADPH as an electron donor. Besides cycloalkanones, can use cyclic alpha,beta-unsaturated ketones as substrates, leading to conjugated ene-lactones. Can also act on methylated cycloalkanones and methylated cycloalkenones with high enantioselectivity in some cases. The protein is Baeyer-Villiger monooxygenase of Pseudooceanicola batsensis (strain ATCC BAA-863 / DSM 15984 / KCTC 12145 / HTCC2597) (Oceanicola batsensis).